The following is a 142-amino-acid chain: Ribonuclease VapC25 (142 aa).

In terms of domain architecture, PINc spans 3–139 (LIDVNVLLAA…ARFASVRHIR (137 aa)). Mg(2+)-binding residues include D5 and D108.

Belongs to the PINc/VapC protein family. Requires Mg(2+) as cofactor.

Its function is as follows. Toxic component of a type II toxin-antitoxin (TA) system. An RNase. Upon expression in M.smegmatis inhibits colony formation. Its toxic effect is neutralized by coexpression with cognate antitoxin VapB25. This is Ribonuclease VapC25 from Mycobacterium tuberculosis (strain ATCC 25618 / H37Rv).